Consider the following 107-residue polypeptide: Late embryogenesis abundant protein M10 (107 aa).

The first 19 residues, Met-1–Ala-19, serve as a signal peptide directing secretion.

May be involved in the acquisition of desiccation tolerance during late phase of embryogenesis. The protein is Late embryogenesis abundant protein M10 of Arabidopsis thaliana (Mouse-ear cress).